The chain runs to 489 residues: Long chain base biosynthesis protein 2d (489 aa).

The chain crosses the membrane as a helical span at residues 4-24; that stretch reads LPYVTALTTLFSYGLLFAFGQ. Lysine 311 is modified (N6-(pyridoxal phosphate)lysine).

Belongs to the class-II pyridoxal-phosphate-dependent aminotransferase family. In terms of assembly, heterodimer with LCB1. Component of the serine palmitoyltransferase (SPT) complex, composed of LCB1 and LCB2. Pyridoxal 5'-phosphate serves as cofactor.

It is found in the endoplasmic reticulum membrane. The catalysed reaction is L-serine + hexadecanoyl-CoA + H(+) = 3-oxosphinganine + CO2 + CoA. It functions in the pathway lipid metabolism; sphingolipid metabolism. Its function is as follows. Serine palmitoyltransferase (SPT). The heterodimer formed with LCB1 constitutes the catalytic core. This chain is Long chain base biosynthesis protein 2d, found in Oryza sativa subsp. japonica (Rice).